The following is a 642-amino-acid chain: MESPTHPKPSKDKTLSWNLAFLVGILFTIDIGMANPSPHQIYNVTWVITNVQTNTQANATSMLGTLTDAYPTLHVDLCDLVGDTWEPIVLNPTNVKHGARYSSSKYGCKTTDRKKQQQTYPFYVCPGHAPSLGPKGTHCGGAQDGFCAAWGCETTGEAWWKPTSSWDYITVKRGSSQDNSCEGKCNPLVLQFTQKGRQASWDGPKMWGLRLYRTGYDPIALFTVSRQVSTITPPQAMGPNLVLPDQKPPSRQSQTGSKVATQRPQTNESAPRSVAPTTMGPKRIGTGDRLINLVQGTYLALNATDPNKTKDCWLCLVSRPPYYEGIAILGNYSNQTNPPPSCLSTPQHKLTISEVSGQGMCIGTVPKTHQALCNKTQQGHTGAHYLAAPNGTYWACNTGLTPCISMAVLNWTSDFCVLIELWPRVTYHQPEYVYTHFAKAVRFRREPISLTVALMLGGLTVGGIAAGVGTGTKALLETAQFRQLQMAMHTDIQALEESISALEKSLTSLSEVVLQNRRGLDILFLQEGGLCAALKEECCFYADHTGLVRDNMAKLRERLKQRQQLFDSQQGWFEGWFNKSPWFTTLISSIMGPLLILLLILLFGPCILNRLVQFVKDRISVVQALILTQQYQQIKQYDPDRP.

The signal sequence occupies residues 1–34 (MESPTHPKPSKDKTLSWNLAFLVGILFTIDIGMA). Residues 35–586 (NPSPHQIYNV…FNKSPWFTTL (552 aa)) lie on the Extracellular side of the membrane. Asn43 and Asn58 each carry an N-linked (GlcNAc...) asparagine; by host glycan. 2 disulfides stabilise this stretch: Cys125–Cys147 and Cys139–Cys152. Positions 233 to 283 (PPQAMGPNLVLPDQKPPSRQSQTGSKVATQRPQTNESAPRSVAPTTMGPKR) are disordered. Polar residues predominate over residues 249–270 (PSRQSQTGSKVATQRPQTNESA). N-linked (GlcNAc...) asparagine; by host glycosylation is found at Asn267, Asn302, and Asn307. Cystine bridges form between Cys312–Cys315, Cys312–Cys539, and Cys531–Cys538. Positions 312–315 (CWLC) match the CXXC motif. Asn334, Asn374, Asn390, and Asn410 each carry an N-linked (GlcNAc...) asparagine; by host glycan. Residues 448–468 (ISLTVALMLGGLTVGGIAAGV) are fusion peptide. Coiled-coil stretches lie at residues 476–525 (LETA…ILFL) and 535–571 (KEEC…SQQG). Residues 514-530 (LQNRRGLDILFLQEGGL) are immunosuppression. Positions 531-539 (CAALKEECC) match the CX6CC motif. Residues 587–607 (ISSIMGPLLILLLILLFGPCI) form a helical membrane-spanning segment. Cys606 carries S-palmitoyl cysteine; by host lipidation. The Cytoplasmic portion of the chain corresponds to 608 to 642 (LNRLVQFVKDRISVVQALILTQQYQQIKQYDPDRP).

As to quaternary structure, the mature envelope protein (Env) consists of a trimer of SU-TM heterodimers attached by a labile interchain disulfide bond. In terms of processing, specific enzymatic cleavages in vivo yield mature proteins. Envelope glycoproteins are synthesized as an inactive precursor that is N-glycosylated and processed likely by host cell furin or by a furin-like protease in the Golgi to yield the mature SU and TM proteins. The cleavage site between SU and TM requires the minimal sequence [KR]-X-[KR]-R. The R-peptide is released from the C-terminus of the cytoplasmic tail of the TM protein upon particle formation as a result of proteolytic cleavage by the viral protease. Cleavage of this peptide is required for TM to become fusogenic. Post-translationally, the CXXC motif is highly conserved across a broad range of retroviral envelope proteins. It is thought to participate in the formation of a labile disulfide bond possibly with the CX6CC motif present in the transmembrane protein. Isomerization of the intersubunit disulfide bond to an SU intrachain disulfide bond is thought to occur upon receptor recognition in order to allow membrane fusion. The transmembrane protein is palmitoylated. In terms of processing, the R-peptide is palmitoylated.

The protein localises to the virion membrane. It localises to the host cell membrane. Functionally, the surface protein (SU) attaches the virus to the host cell by binding to its receptor. This interaction triggers the refolding of the transmembrane protein (TM) and is thought to activate its fusogenic potential by unmasking its fusion peptide. Fusion occurs at the host cell plasma membrane. In terms of biological role, the transmembrane protein (TM) acts as a class I viral fusion protein. Under the current model, the protein has at least 3 conformational states: pre-fusion native state, pre-hairpin intermediate state, and post-fusion hairpin state. During viral and target cell membrane fusion, the coiled coil regions (heptad repeats) assume a trimer-of-hairpins structure, positioning the fusion peptide in close proximity to the C-terminal region of the ectodomain. The formation of this structure appears to drive apposition and subsequent fusion of viral and target cell membranes. Membranes fusion leads to delivery of the nucleocapsid into the cytoplasm. The chain is Envelope glycoprotein (env) from Felidae (cat family).